The following is a 329-amino-acid chain: 4-hydroxythreonine-4-phosphate dehydrogenase (329 aa).

Substrate is bound by residues histidine 136 and threonine 137. A divalent metal cation contacts are provided by histidine 166, histidine 211, and histidine 266. Substrate contacts are provided by lysine 274, asparagine 283, and arginine 292.

This sequence belongs to the PdxA family. Homodimer. Zn(2+) serves as cofactor. Mg(2+) is required as a cofactor. Requires Co(2+) as cofactor.

The protein resides in the cytoplasm. The enzyme catalyses 4-(phosphooxy)-L-threonine + NAD(+) = 3-amino-2-oxopropyl phosphate + CO2 + NADH. It functions in the pathway cofactor biosynthesis; pyridoxine 5'-phosphate biosynthesis; pyridoxine 5'-phosphate from D-erythrose 4-phosphate: step 4/5. Functionally, catalyzes the NAD(P)-dependent oxidation of 4-(phosphooxy)-L-threonine (HTP) into 2-amino-3-oxo-4-(phosphooxy)butyric acid which spontaneously decarboxylates to form 3-amino-2-oxopropyl phosphate (AHAP). This Salmonella arizonae (strain ATCC BAA-731 / CDC346-86 / RSK2980) protein is 4-hydroxythreonine-4-phosphate dehydrogenase.